Here is a 315-residue protein sequence, read N- to C-terminus: Petrobactin import system permease protein YclO (315 aa).

Transmembrane regions (helical) follow at residues 7 to 27, 40 to 60, 76 to 96, 100 to 120, 128 to 148, 172 to 192, 223 to 243, 262 to 282, and 288 to 308; these read IALLVGLAIVCIGLFLFYDLG, VAAIVLTGGAIAFSTMIFQTI, LYMLIQTGIIFLFGSANMVIM, INFIISVLLMILFSLVLYQIM, IFFLLLIGIVFGTLFSSLSSF, INTDLLWLAFIIFLLTGVYVW, LIVVAILVSVSTALVGPIMFL, YLIAGSVFISIIALVGGQFVV, and FSTTLSVIINFAGGIYFIYLL.

This sequence belongs to the binding-protein-dependent transport system permease family. FecCD subfamily. As to quaternary structure, the complex is composed of two ATP-binding proteins (YclP), two transmembrane proteins (YclN and YclO) and a solute-binding protein (YclQ).

The protein resides in the cell membrane. In terms of biological role, part of the ABC transporter complex YclNOPQ involved in uptake of ferric-petrobactin. Petrobactin is a photoreactive 3,4-catecholate siderophore produced by many members of the B.cereus group, including B.anthracis. Probably responsible for the translocation of the substrate across the membrane. This chain is Petrobactin import system permease protein YclO (yclO), found in Bacillus subtilis (strain 168).